Here is a 497-residue protein sequence, read N- to C-terminus: 4,4'-diaponeurosporene oxygenase (497 aa).

Residue 7-19 (VIGGGLGGISAAI) participates in FAD binding.

It belongs to the carotenoid/retinoid oxidoreductase family. CrtP subfamily. Requires FAD as cofactor.

It catalyses the reaction all-trans-4,4'-diaponeurosporene + 2 AH2 + 2 O2 = 4,4'-diaponeurosporenal + 2 A + 3 H2O. The protein operates within carotenoid biosynthesis; staphyloxanthin biosynthesis; staphyloxanthin from farnesyl diphosphate: step 3/5. Its function is as follows. Involved in the biosynthesis of the yellow-orange carotenoid staphyloxanthin, which plays a role in the virulence via its protective function against oxidative stress. Catalyzes the oxidation of the terminal methyl side group of 4,4'-diaponeurosporene to form 4,4'-diaponeurosporen-4-al. The chain is 4,4'-diaponeurosporene oxygenase from Staphylococcus aureus (strain MRSA252).